The chain runs to 201 residues: Dephospho-CoA kinase (201 aa).

The region spanning 3–201 (IIGLTGGMAA…ALLHRLREAS (199 aa)) is the DPCK domain. 11–16 (AAGKST) serves as a coordination point for ATP.

The protein belongs to the CoaE family.

The protein localises to the cytoplasm. It carries out the reaction 3'-dephospho-CoA + ATP = ADP + CoA + H(+). The protein operates within cofactor biosynthesis; coenzyme A biosynthesis; CoA from (R)-pantothenate: step 5/5. In terms of biological role, catalyzes the phosphorylation of the 3'-hydroxyl group of dephosphocoenzyme A to form coenzyme A. The protein is Dephospho-CoA kinase of Gluconobacter oxydans (strain 621H) (Gluconobacter suboxydans).